Consider the following 304-residue polypeptide: 1D-myo-inositol 2-acetamido-2-deoxy-alpha-D-glucopyranoside deacetylase 2 (304 aa).

Positions 17, 20, and 152 each coordinate Zn(2+).

Belongs to the MshB deacetylase family. Zn(2+) is required as a cofactor.

The catalysed reaction is 1D-myo-inositol 2-acetamido-2-deoxy-alpha-D-glucopyranoside + H2O = 1D-myo-inositol 2-amino-2-deoxy-alpha-D-glucopyranoside + acetate. In terms of biological role, catalyzes the deacetylation of 1D-myo-inositol 2-acetamido-2-deoxy-alpha-D-glucopyranoside (GlcNAc-Ins) in the mycothiol biosynthesis pathway. The polypeptide is 1D-myo-inositol 2-acetamido-2-deoxy-alpha-D-glucopyranoside deacetylase 2 (Catenulispora acidiphila (strain DSM 44928 / JCM 14897 / NBRC 102108 / NRRL B-24433 / ID139908)).